A 981-amino-acid chain; its full sequence is DNA ligase 4 (981 aa).

The ATP site is built by E320, K322, R327, E380, F424, E484, K489, K506, and K508. The N6-AMP-lysine intermediate role is filled by K322. E380 lines the Mg(2+) pocket. Position 484 (E484) interacts with Mg(2+). Residues 544-563 (SEKNNPSSYESGSDSDSDSE) form a disordered region. BRCT domains follow at residues 721–819 (SKAD…PKYV) and 875–980 (ERLL…EYAA).

The protein belongs to the ATP-dependent DNA ligase family. Requires Mg(2+) as cofactor.

The protein localises to the nucleus. The catalysed reaction is ATP + (deoxyribonucleotide)n-3'-hydroxyl + 5'-phospho-(deoxyribonucleotide)m = (deoxyribonucleotide)n+m + AMP + diphosphate.. Functionally, DNA ligase involved in DNA non-homologous end joining (NHEJ); required for double-strand break (DSB) repair. The protein is DNA ligase 4 (LIG4) of Eremothecium gossypii (strain ATCC 10895 / CBS 109.51 / FGSC 9923 / NRRL Y-1056) (Yeast).